Consider the following 276-residue polypeptide: Bis(5'-nucleosyl)-tetraphosphatase, symmetrical (276 aa).

Belongs to the Ap4A hydrolase family.

The enzyme catalyses P(1),P(4)-bis(5'-adenosyl) tetraphosphate + H2O = 2 ADP + 2 H(+). Functionally, hydrolyzes diadenosine 5',5'''-P1,P4-tetraphosphate to yield ADP. This Legionella pneumophila subsp. pneumophila (strain Philadelphia 1 / ATCC 33152 / DSM 7513) protein is Bis(5'-nucleosyl)-tetraphosphatase, symmetrical.